Consider the following 206-residue polypeptide: Transcription elongation factor A protein-like 5 (206 aa).

A compositionally biased stretch (basic and acidic residues) spans 1 to 26 (MEKLYKENEGKPENERNLESEGKPED). The disordered stretch occupies residues 1 to 206 (MEKLYKENEG…QKDLEDVPYV (206 aa)). The span at 27-42 (EGSTEDEGKSDEEEKP) shows a compositional bias: acidic residues. A compositionally biased stretch (basic and acidic residues) spans 43 to 56 (DMEGKTECEGKRED). A compositionally biased stretch (acidic residues) spans 57–70 (EGEPGDEGQLEDEG). 4 stretches are compositionally biased toward basic and acidic residues: residues 71–86 (NQEK…KPQS), 102–113 (AAEKRPAEDYVP), 121–160 (DRGT…EELR), and 196–206 (GQKDLEDVPYV).

The protein belongs to the TFS-II family. TFA subfamily.

Its subcellular location is the nucleus. Functionally, may be involved in transcriptional regulation. This is Transcription elongation factor A protein-like 5 (TCEAL5) from Homo sapiens (Human).